Here is a 237-residue protein sequence, read N- to C-terminus: Cytosolic-abundant heat soluble protein 1 (237 aa).

Basic and acidic residues-rich tracts occupy residues 1-17 (MPYE…KTEQ) and 91-105 (VDMR…EARR). Disordered regions lie at residues 1–35 (MPYE…VARE) and 85–105 (SGAS…EARR). Residues 98-201 (KLAEEARRDA…KEALERSRMA (104 aa)) are a coiled coil. CAHS motif regions lie at residues 132-150 (YRHQ…LEKQ) and 169-187 (QKRE…LDRE). The segment at 212 to 237 (AGHTVSGGTTVSSVDKVETVRERKHH) is disordered. Basic and acidic residues predominate over residues 226–237 (DKVETVRERKHH).

The protein belongs to the Cytosolic-abundant heat soluble protein (CAHS) family.

The protein resides in the cytoplasm. Its subcellular location is the nucleus. Its function is as follows. CAHS proteins are cytosolic heat soluble proteins that seem to contribute to the anhydrobiosis in tardigrades, but their specific mechanisms are yet to be identified. It is possible that protection during anhydrobiosis might occur via the stabilization of vitrifying small molecules such as sugars, but not via the direct glass transition of CAHS proteins themselves. This Ramazzottius varieornatus (Water bear) protein is Cytosolic-abundant heat soluble protein 1.